The following is a 313-amino-acid chain: Putative HTH-type transcriptional regulatory protein Msm_0453 (313 aa).

The HTH cro/C1-type domain occupies 131-189; the sequence is IKQYREEYSLSLKDLADLAHVSRATMYKYENEIVRANTETAMILEEILNTKVTLDIDLL. The H-T-H motif DNA-binding region spans 142–161; it reads LKDLADLAHVSRATMYKYEN.

This is Putative HTH-type transcriptional regulatory protein Msm_0453 from Methanobrevibacter smithii (strain ATCC 35061 / DSM 861 / OCM 144 / PS).